Here is a 192-residue protein sequence, read N- to C-terminus: uncharacterized protein (192 aa).

In terms of domain architecture, Nudix hydrolase spans 29–160 (QRQAAVLVPI…PLDIERKQQR (132 aa)). The Nudix box motif lies at 67–89 (GAADKTDRSIIETALREAQEEVA). The Mg(2+) site is built by Glu-83 and Glu-87.

This sequence belongs to the Nudix hydrolase family. PCD1 subfamily. It depends on Mn(2+) as a cofactor. The cofactor is Mg(2+).

Functionally, probably mediates the hydrolysis of some nucleoside diphosphate derivatives. This is an uncharacterized protein from Pectobacterium atrosepticum (strain SCRI 1043 / ATCC BAA-672) (Erwinia carotovora subsp. atroseptica).